A 329-amino-acid polypeptide reads, in one-letter code: Malate dehydrogenase (329 aa).

12–18 serves as a coordination point for NAD(+); it reads GAAGQIG. Substrate-binding residues include Arg93 and Arg99. NAD(+) is bound by residues Asn106, Gln113, and 130–132; that span reads VGN. Substrate-binding residues include Asn132 and Arg163. His188 acts as the Proton acceptor in catalysis.

The protein belongs to the LDH/MDH superfamily. MDH type 2 family.

It catalyses the reaction (S)-malate + NAD(+) = oxaloacetate + NADH + H(+). In terms of biological role, catalyzes the reversible oxidation of malate to oxaloacetate. This chain is Malate dehydrogenase, found in Streptomyces griseus subsp. griseus (strain JCM 4626 / CBS 651.72 / NBRC 13350 / KCC S-0626 / ISP 5235).